We begin with the raw amino-acid sequence, 95 residues long: uncharacterized protein (95 aa).

Residues 3 to 23 (FVIIIAILLLGISLILAFTVL) form a helical membrane-spanning segment.

Its subcellular location is the membrane. This is an uncharacterized protein from Methanocaldococcus jannaschii (strain ATCC 43067 / DSM 2661 / JAL-1 / JCM 10045 / NBRC 100440) (Methanococcus jannaschii).